The chain runs to 1008 residues: Probable pre-mRNA-splicing factor ATP-dependent RNA helicase mog-4 (1008 aa).

2 disordered regions span residues serine 104 to aspartate 146 and asparagine 169 to serine 202. A compositionally biased stretch (low complexity) spans lysine 127–proline 137. Positions isoleucine 374 to proline 538 constitute a Helicase ATP-binding domain. Glycine 387–threonine 394 contributes to the ATP binding site. The DEAH box motif lies at aspartate 485–histidine 488. Positions threonine 563–glycine 737 constitute a Helicase C-terminal domain. Residues glutamate 988 to arginine 1008 form a disordered region.

Belongs to the DEAD box helicase family. DEAH subfamily. DDX16/PRP8 sub-subfamily. Interacts with mep-1 and smn-1.

The protein resides in the nucleus. The catalysed reaction is ATP + H2O = ADP + phosphate + H(+). Its function is as follows. ATP-binding RNA helicase involved in pre-mRNA splicing. Operates during embryogenesis. The sequence is that of Probable pre-mRNA-splicing factor ATP-dependent RNA helicase mog-4 (mog-4) from Caenorhabditis elegans.